Here is a 429-residue protein sequence, read N- to C-terminus: Protein FAM98B (429 aa).

Residues 304-429 (RVPDRGGRPN…GGGGGGYRRY (126 aa)) are disordered. Residues 305 to 314 (VPDRGGRPNE) show a composition bias toward basic and acidic residues. Over residues 332-429 (GGRGGWGGGG…GGGGGGYRRY (98 aa)) the composition is skewed to gly residues.

Belongs to the FAM98 family. As to quaternary structure, homodimer. Component of a tRNA-splicing ligase complex. Interacts with FAM98A.

It localises to the nucleus. The protein localises to the cytoplasm. Functionally, positively stimulates PRMT1-induced protein arginine dimethylated arginine methylation. The chain is Protein FAM98B (Fam98b) from Mus musculus (Mouse).